Consider the following 150-residue polypeptide: Ribosomal RNA large subunit methyltransferase H (150 aa).

Residues Ala100 and 118-123 (LSEMTF) contribute to the S-adenosyl-L-methionine site.

Belongs to the RNA methyltransferase RlmH family. Homodimer.

It is found in the cytoplasm. It catalyses the reaction pseudouridine(1915) in 23S rRNA + S-adenosyl-L-methionine = N(3)-methylpseudouridine(1915) in 23S rRNA + S-adenosyl-L-homocysteine + H(+). Specifically methylates the pseudouridine at position 1915 (m3Psi1915) in 23S rRNA. The polypeptide is Ribosomal RNA large subunit methyltransferase H (Helicobacter pylori (strain HPAG1)).